The sequence spans 128 residues: Ribonuclease P protein component (128 aa).

This sequence belongs to the RnpA family. As to quaternary structure, consists of a catalytic RNA component (M1 or rnpB) and a protein subunit.

It carries out the reaction Endonucleolytic cleavage of RNA, removing 5'-extranucleotides from tRNA precursor.. In terms of biological role, RNaseP catalyzes the removal of the 5'-leader sequence from pre-tRNA to produce the mature 5'-terminus. It can also cleave other RNA substrates such as 4.5S RNA. The protein component plays an auxiliary but essential role in vivo by binding to the 5'-leader sequence and broadening the substrate specificity of the ribozyme. This is Ribonuclease P protein component from Prochlorococcus marinus (strain MIT 9303).